A 202-amino-acid polypeptide reads, in one-letter code: Pyridoxal 5'-phosphate synthase subunit PdxT (202 aa).

49-51 (GES) is a binding site for L-glutamine. The active-site Nucleophile is the Cys-81. Residues Arg-110 and 139-140 (IR) each bind L-glutamine. Catalysis depends on charge relay system residues His-182 and Glu-184.

It belongs to the glutaminase PdxT/SNO family. In terms of assembly, in the presence of PdxS, forms a dodecamer of heterodimers. Only shows activity in the heterodimer.

The enzyme catalyses aldehydo-D-ribose 5-phosphate + D-glyceraldehyde 3-phosphate + L-glutamine = pyridoxal 5'-phosphate + L-glutamate + phosphate + 3 H2O + H(+). The catalysed reaction is L-glutamine + H2O = L-glutamate + NH4(+). Its pathway is cofactor biosynthesis; pyridoxal 5'-phosphate biosynthesis. Catalyzes the hydrolysis of glutamine to glutamate and ammonia as part of the biosynthesis of pyridoxal 5'-phosphate. The resulting ammonia molecule is channeled to the active site of PdxS. In Rhodococcus opacus (strain B4), this protein is Pyridoxal 5'-phosphate synthase subunit PdxT.